The primary structure comprises 20 residues: Putative serine protease (20 aa).

Belongs to the peptidase S1 family.

The protein resides in the secreted. In terms of biological role, binds the A.niger cell wall component alpha-1,3-glucan, a fungal pathogen-associated molecular pattern (PAMP) that activates the host immune response. This is Putative serine protease from Galleria mellonella (Greater wax moth).